A 44-amino-acid polypeptide reads, in one-letter code: MARGDYYSDDGTTDKEMCPRCGDTFLAAHDDRQVCGRCGYTEWE.

The Zn(2+) site is built by cysteine 18, cysteine 21, cysteine 35, and cysteine 38. Residues 18-38 form a C4-type zinc finger; the sequence is CPRCGDTFLAAHDDRQVCGRC.

Belongs to the eukaryotic ribosomal protein eS31 family. As to quaternary structure, part of the 30S ribosomal subunit. Zn(2+) is required as a cofactor.

The protein is Small ribosomal subunit protein eS31 of Halobacterium salinarum (strain ATCC 29341 / DSM 671 / R1).